Consider the following 597-residue polypeptide: 66 kDa protein (597 aa).

Disordered regions lie at residues 62 to 82, 160 to 198, 218 to 315, 329 to 411, and 535 to 586; these read VRLQ…PSLQ, HSVP…FRQH, NQLA…SCRV, HFKS…LHHD, and SSPQ…ASAL. Residues 64–80 show a composition bias toward polar residues; that stretch reads LQSSPPRGPQSDRNLPS. The segment covering 218–234 has biased composition (polar residues); sequence NQLAQAQQHPLPSSKPL. The span at 273 to 291 shows a compositional bias: low complexity; it reads PSSRGHLPSSTSSSSPRSN. The segment covering 305 to 315 has biased composition (polar residues); the sequence is SNSQDLRSCRV. Over residues 389–400 the composition is skewed to basic residues; the sequence is QTHHARLPHSKR. Positions 535-574 are enriched in low complexity; the sequence is SSPQSHSSESLRGDSPPSSHLPSSPSSACSGDSFASCSSF. Residues 575 to 584 show a composition bias toward polar residues; sequence GPSNPTSSAS.

This sequence belongs to the tymoviridae protein p69 family.

The protein is 66 kDa protein of Ononis.